Reading from the N-terminus, the 291-residue chain is Malolactic fermentation system transcriptional activator (291 aa).

The HTH lysR-type domain maps to 1–60; it reads MSLNLRDLEYFYQLSKLRSFTNVAKHFRVSQPTISYAIKRLETYYDCDLFYKDSSHQVVD. Residues 20-39 constitute a DNA-binding region (H-T-H motif); that stretch reads FTNVAKHFRVSQPTISYAIK.

Belongs to the LysR transcriptional regulatory family.

It localises to the cytoplasm. Its function is as follows. Required for malolactic fermentation. It is most probably a transcriptional activator. The sequence is that of Malolactic fermentation system transcriptional activator (mleR) from Lactococcus lactis subsp. lactis (strain IL1403) (Streptococcus lactis).